The following is a 234-amino-acid chain: Proteasome subunit alpha type-2 (234 aa).

The protein belongs to the peptidase T1A family. The 26S proteasome consists of a 20S proteasome core and two 19S regulatory subunits. The 20S proteasome core is composed of 28 subunits that are arranged in four stacked rings, resulting in a barrel-shaped structure. The two end rings are each formed by seven alpha subunits, and the two central rings are each formed by seven beta subunits. The catalytic chamber with the active sites is on the inside of the barrel. Interacts with Rpn6.

The protein localises to the cytoplasm. The protein resides in the nucleus. Its function is as follows. The proteasome is a multicatalytic proteinase complex which is characterized by its ability to cleave peptides with Arg, Phe, Tyr, Leu, and Glu adjacent to the leaving group at neutral or slightly basic pH. The proteasome has an ATP-dependent proteolytic activity. The protein is Proteasome subunit alpha type-2 (Prosalpha2) of Drosophila melanogaster (Fruit fly).